Consider the following 282-residue polypeptide: Secretory carrier-associated membrane protein 3 (282 aa).

The interval methionine 1–histidine 36 is disordered. The Cytoplasmic portion of the chain corresponds to methionine 1 to glutamine 117. Positions leucine 48–lysine 92 form a coiled coil. 4 consecutive transmembrane segments (helical) span residues tyrosine 118 to threonine 138, valine 148 to leucine 168, phenylalanine 185 to alanine 205, and isoleucine 230 to isoleucine 250. The Cytoplasmic segment spans residues glycine 251–phenylalanine 282.

The protein belongs to the SCAMP family.

Its subcellular location is the cell membrane. It is found in the cytoplasmic vesicle. It localises to the secretory vesicle membrane. Functionally, probably involved in membrane trafficking. The sequence is that of Secretory carrier-associated membrane protein 3 (SCAMP3) from Oryza sativa subsp. japonica (Rice).